A 1438-amino-acid polypeptide reads, in one-letter code: Lysophospholipase NTE1 (1438 aa).

Over 1 to 25 (MDSDTSSADFHSTETLVSTPKYSYG) the chain is Cytoplasmic. A helical transmembrane segment spans residues 26–46 (VLINVILLVSWTCFRVVNWFL). The Lumenal portion of the chain corresponds to 47-64 (VTLPSILLGMLSKTFQIT). The chain crosses the membrane as a helical span at residues 65–85 (LSLSSILMFVVAVTAICFLVV). The Cytoplasmic portion of the chain corresponds to 86-1438 (RYKYLTRYSR…HVSLSRRNSI (1353 aa)). The segment covering 432–450 (YETQTIPNESEDSPTIQRS) has biased composition (polar residues). Residues 432-464 (YETQTIPNESEDSPTIQRSSLRRRASHSTSLRK) are disordered. Residues 590–720 (GDDS…LTID) and 707–856 (RLKR…VANR) each bind a nucleoside 3',5'-cyclic phosphate. In terms of domain architecture, PNPLA spans 1131–1295 (LVLGGGGSRG…LDNLPVSEMK (165 aa)). The GXGXXG motif lies at 1135–1140 (GGGSRG). The short motif at 1162-1166 (GTSIG) is the GXSXG element. Catalysis depends on Ser-1164, which acts as the Nucleophile. Asp-1282 (proton acceptor) is an active-site residue. The DGA/G motif lies at 1282–1284 (DGG).

Belongs to the NTE family.

It localises to the endoplasmic reticulum membrane. It catalyses the reaction a 1-acyl-sn-glycero-3-phosphocholine + H2O = sn-glycerol 3-phosphocholine + a fatty acid + H(+). With respect to regulation, inhibited by organophosphorus esters. In terms of biological role, intracellular phospholipase B that catalyzes the double deacylation of phosphatidylcholine (PC) to glycerophosphocholine (GroPCho). Plays an important role in membrane lipid homeostasis. Responsible for the rapid PC turnover in response to inositol, elevated temperatures, or when choline is present in the growth medium. In Meyerozyma guilliermondii (strain ATCC 6260 / CBS 566 / DSM 6381 / JCM 1539 / NBRC 10279 / NRRL Y-324) (Yeast), this protein is Lysophospholipase NTE1 (NTE1).